A 56-amino-acid polypeptide reads, in one-letter code: Large ribosomal subunit protein bL32 (56 aa).

This sequence belongs to the bacterial ribosomal protein bL32 family.

This Synechococcus sp. (strain CC9311) protein is Large ribosomal subunit protein bL32.